Here is a 129-residue protein sequence, read N- to C-terminus: Lysozyme C (129 aa).

In terms of domain architecture, C-type lysozyme spans 1 to 129 (KVYGRCELAA…VNAWIRGCRL (129 aa)). Cystine bridges form between cysteine 6–cysteine 127, cysteine 30–cysteine 115, cysteine 64–cysteine 80, and cysteine 76–cysteine 94. Active-site residues include glutamate 35 and aspartate 52.

It belongs to the glycosyl hydrolase 22 family. In terms of assembly, monomer.

Its subcellular location is the secreted. The enzyme catalyses Hydrolysis of (1-&gt;4)-beta-linkages between N-acetylmuramic acid and N-acetyl-D-glucosamine residues in a peptidoglycan and between N-acetyl-D-glucosamine residues in chitodextrins.. In terms of biological role, lysozymes have primarily a bacteriolytic function; those in tissues and body fluids are associated with the monocyte-macrophage system and enhance the activity of immunoagents. The protein is Lysozyme C (LYZ) of Syrmaticus reevesii (Reeves's pheasant).